A 161-amino-acid polypeptide reads, in one-letter code: SsrA-binding protein (161 aa).

This sequence belongs to the SmpB family.

The protein resides in the cytoplasm. Its function is as follows. Required for rescue of stalled ribosomes mediated by trans-translation. Binds to transfer-messenger RNA (tmRNA), required for stable association of tmRNA with ribosomes. tmRNA and SmpB together mimic tRNA shape, replacing the anticodon stem-loop with SmpB. tmRNA is encoded by the ssrA gene; the 2 termini fold to resemble tRNA(Ala) and it encodes a 'tag peptide', a short internal open reading frame. During trans-translation Ala-aminoacylated tmRNA acts like a tRNA, entering the A-site of stalled ribosomes, displacing the stalled mRNA. The ribosome then switches to translate the ORF on the tmRNA; the nascent peptide is terminated with the 'tag peptide' encoded by the tmRNA and targeted for degradation. The ribosome is freed to recommence translation, which seems to be the essential function of trans-translation. The chain is SsrA-binding protein from Vibrio parahaemolyticus serotype O3:K6 (strain RIMD 2210633).